The following is a 60-amino-acid chain: Large ribosomal subunit protein bL32 (60 aa).

This sequence belongs to the bacterial ribosomal protein bL32 family.

In Streptococcus equi subsp. zooepidemicus (strain MGCS10565), this protein is Large ribosomal subunit protein bL32.